The chain runs to 545 residues: MAEDPYEVGRGVSRAFWADSVADAIEARDPDEPIVIKGGVSPSGVPHIGHFNEIMRGYYVAEALRDRGHEVRQVFTADDKDRLRAVPRQLADLDWNVVGLGEVDAGALGRNLGKPYTDIPDPFGCCDSYGAHFTALLQKSAELVGVDVEFVSNTELYADGEFEAVTRRVLERADRARDVLAEYQNKVDDDYVPFLPQCAECGKITEGVTAVDLDAGEVEYVCEDVEAGDQTIDGCGHEGTATLRDGKLPWRFEWPAQWEILGVDFEPFGKDHAEGSWPSGEDVAENVLDIQPPVPMVYEWFTLDGEPLSSSSGNVITVDEVLDILEPEVFKYFFVKDPRKQRDFSVENIDQLVDEFDRFERRYFEEIEASEDDAELAERAYPMVVDDPREQRIRIPYTFAAVLGMTDDPALREQIARKEGHIPDDAPEWAVEQALARVERAQEWASLTNNEFNYELKRAEIPEVSFDDATAAALDELADFIAEGHDGEAIQSEIYETAKRNDIDISEFFSAGYRLLFDDTEGPQLGTFIAKLDREFVVERFRRNE.

The short motif at 42–50 is the 'HIGH' region element; the sequence is PSGVPHIGH. Positions 307–311 match the 'KMSKS' region motif; it reads PLSSS.

It belongs to the class-I aminoacyl-tRNA synthetase family.

Its subcellular location is the cytoplasm. The enzyme catalyses tRNA(Lys) + L-lysine + ATP = L-lysyl-tRNA(Lys) + AMP + diphosphate. This chain is Lysine--tRNA ligase, found in Haloarcula marismortui (strain ATCC 43049 / DSM 3752 / JCM 8966 / VKM B-1809) (Halobacterium marismortui).